The sequence spans 442 residues: GTPase Der (442 aa).

EngA-type G domains follow at residues Pro-3–Asp-167 and Pro-177–Met-350. Residues Gly-9–Ser-16, Asp-56–Phe-60, Asn-119–Glu-122, Gly-183–Ser-190, Asp-230–Leu-234, and Asn-295–Asp-298 contribute to the GTP site. A KH-like domain is found at Ser-351–His-435.

This sequence belongs to the TRAFAC class TrmE-Era-EngA-EngB-Septin-like GTPase superfamily. EngA (Der) GTPase family. In terms of assembly, associates with the 50S ribosomal subunit.

In terms of biological role, GTPase that plays an essential role in the late steps of ribosome biogenesis. The sequence is that of GTPase Der from Azoarcus sp. (strain BH72).